We begin with the raw amino-acid sequence, 440 residues long: Xylose isomerase (440 aa).

Catalysis depends on residues His-100 and Asp-103. Positions 231, 267, 270, 295, 306, 308, and 338 each coordinate Mg(2+).

It belongs to the xylose isomerase family. As to quaternary structure, homotetramer. Mg(2+) is required as a cofactor.

Its subcellular location is the cytoplasm. It catalyses the reaction alpha-D-xylose = alpha-D-xylulofuranose. In Burkholderia thailandensis (strain ATCC 700388 / DSM 13276 / CCUG 48851 / CIP 106301 / E264), this protein is Xylose isomerase.